A 104-amino-acid polypeptide reads, in one-letter code: Small ribosomal subunit protein uS10 (104 aa).

It belongs to the universal ribosomal protein uS10 family. As to quaternary structure, part of the 30S ribosomal subunit.

Involved in the binding of tRNA to the ribosomes. The protein is Small ribosomal subunit protein uS10 of Albidiferax ferrireducens (strain ATCC BAA-621 / DSM 15236 / T118) (Rhodoferax ferrireducens).